Here is a 219-residue protein sequence, read N- to C-terminus: N-(5'-phosphoribosyl)anthranilate isomerase (219 aa).

It belongs to the TrpF family.

The enzyme catalyses N-(5-phospho-beta-D-ribosyl)anthranilate = 1-(2-carboxyphenylamino)-1-deoxy-D-ribulose 5-phosphate. It functions in the pathway amino-acid biosynthesis; L-tryptophan biosynthesis; L-tryptophan from chorismate: step 3/5. The protein is N-(5'-phosphoribosyl)anthranilate isomerase of Bradyrhizobium sp. (strain ORS 278).